The following is a 209-amino-acid chain: Large ribosomal subunit protein uL3 (209 aa).

Residue Gln-150 is modified to N5-methylglutamine.

The protein belongs to the universal ribosomal protein uL3 family. In terms of assembly, part of the 50S ribosomal subunit. Forms a cluster with proteins L14 and L19. Methylated by PrmB.

In terms of biological role, one of the primary rRNA binding proteins, it binds directly near the 3'-end of the 23S rRNA, where it nucleates assembly of the 50S subunit. This is Large ribosomal subunit protein uL3 from Vibrio vulnificus (strain YJ016).